The primary structure comprises 688 residues: Lectin-domain containing receptor kinase VI.3 (688 aa).

An N-terminal signal peptide occupies residues 1 to 14 (MLVLFLLLTIPTRA). Residues 15 to 306 (QRTTTETPKT…KRGYNSQVLA (292 aa)) are Extracellular-facing. The legume-lectin like stretch occupies residues 22 to 271 (PKTEFIFRGF…AHYVMGWSFS (250 aa)). The chain crosses the membrane as a helical span at residues 307–327 (LIVALSGVTVILLALLFFFVM). The Cytoplasmic segment spans residues 328–688 (YKKRLQQGEV…VSSSSVISGR (361 aa)). The Protein kinase domain maps to 361–640 (FKENRIVGTG…LNGDDDVPEI (280 aa)). ATP is bound by residues 367-375 (VGTGGFGTV) and Lys391. Catalysis depends on Asp490, which acts as the Proton acceptor. A disordered region spans residues 662-688 (VSSDRASSSVPSFSVTRVSSSSVISGR).

It in the C-terminal section; belongs to the protein kinase superfamily. Ser/Thr protein kinase family. In the N-terminal section; belongs to the leguminous lectin family.

The protein resides in the cell membrane. The enzyme catalyses L-seryl-[protein] + ATP = O-phospho-L-seryl-[protein] + ADP + H(+). The catalysed reaction is L-threonyl-[protein] + ATP = O-phospho-L-threonyl-[protein] + ADP + H(+). Functionally, involved in negative regulation of abscisic acid response in seed germination. This chain is Lectin-domain containing receptor kinase VI.3 (LECRK63), found in Arabidopsis thaliana (Mouse-ear cress).